Consider the following 662-residue polypeptide: Calcium-dependent protease (662 aa).

The 334-residue stretch at 196–529 folds into the Peptidase S8 domain; the sequence is QWHLKQTTIG…YGRINALKAV (334 aa). Residues Asp-233, His-270, and Ser-466 each act as charge relay system in the active site. Positions 535-662 constitute a P/Homo B domain; the sequence is AQPEPVSIFT…IRSLTIELGF (128 aa).

This sequence belongs to the peptidase S8 family.

The protein resides in the cytoplasm. Functionally, degrades phycobiliproteins in vitro. Has a substrate specificity similar to that of trypsin. The sequence is that of Calcium-dependent protease (prcA) from Trichormus variabilis (strain ATCC 29413 / PCC 7937) (Anabaena variabilis).